Reading from the N-terminus, the 284-residue chain is 2-dehydro-3-deoxyphosphooctonate aldolase (284 aa).

It belongs to the KdsA family.

It localises to the cytoplasm. It carries out the reaction D-arabinose 5-phosphate + phosphoenolpyruvate + H2O = 3-deoxy-alpha-D-manno-2-octulosonate-8-phosphate + phosphate. The protein operates within carbohydrate biosynthesis; 3-deoxy-D-manno-octulosonate biosynthesis; 3-deoxy-D-manno-octulosonate from D-ribulose 5-phosphate: step 2/3. It functions in the pathway bacterial outer membrane biogenesis; lipopolysaccharide biosynthesis. This chain is 2-dehydro-3-deoxyphosphooctonate aldolase, found in Mannheimia succiniciproducens (strain KCTC 0769BP / MBEL55E).